The sequence spans 84 residues: Large ribosomal subunit protein bL27 (84 aa).

A disordered region spans residues 1–22 (MAHKKAGGSTRNGRDSESKRLG).

The protein belongs to the bacterial ribosomal protein bL27 family.

The polypeptide is Large ribosomal subunit protein bL27 (Shewanella sp. (strain MR-4)).